The sequence spans 383 residues: Acetylornithine deacetylase (383 aa).

H80 serves as a coordination point for Zn(2+). D82 is an active-site residue. Zn(2+) is bound at residue D112. E144 is a catalytic residue. 3 residues coordinate Zn(2+): E145, E169, and H355.

The protein belongs to the peptidase M20A family. ArgE subfamily. Homodimer. The cofactor is Zn(2+). Co(2+) is required as a cofactor. Glutathione serves as cofactor.

The protein resides in the cytoplasm. It catalyses the reaction N(2)-acetyl-L-ornithine + H2O = L-ornithine + acetate. Its pathway is amino-acid biosynthesis; L-arginine biosynthesis; L-ornithine from N(2)-acetyl-L-ornithine (linear): step 1/1. In terms of biological role, catalyzes the hydrolysis of the amide bond of N(2)-acetylated L-amino acids. Cleaves the acetyl group from N-acetyl-L-ornithine to form L-ornithine, an intermediate in L-arginine biosynthesis pathway, and a branchpoint in the synthesis of polyamines. The polypeptide is Acetylornithine deacetylase (Salmonella arizonae (strain ATCC BAA-731 / CDC346-86 / RSK2980)).